A 31-amino-acid chain; its full sequence is TCKQKGEGCSLDVECCSSSCKPGGPLFDFDC.

3 disulfide bridges follow: Cys2–Cys16, Cys9–Cys20, and Cys15–Cys31. Glu14 carries the post-translational modification 4-carboxyglutamate.

The protein belongs to the conotoxin O1 superfamily. In terms of tissue distribution, expressed by the venom duct.

Its subcellular location is the secreted. Functionally, gamma-conotoxins may act on voltage-gated non-specific cation pacemaker channels (HCN). Elicits toxic effects in the freshwater snail Pomacea paludosa after intramuscular injection, but it has no effect when injected intracerebrally into mice. In Conus cancellatus (Cancellate cone), this protein is Gamma-conotoxin-like As7a.